Consider the following 58-residue polypeptide: Cholecystokinins (58 aa).

Residue Tyr52 is modified to Sulfotyrosine. Phe58 is subject to Phenylalanine amide.

Belongs to the gastrin/cholecystokinin family. In terms of assembly, binds to CCK-A receptors in the pancreas and CCK-B receptors in the brain. cholecystokinin 8 binds CCK-A receptors more potently than cholecystokinin 58, cholecystokinin 8 and cholecystokinin 58 bind CCK-B receptors with equal affinity. In terms of processing, the precursor is cleaved by proteases to produce a number of active cholecystokinins. Post-translationally, cholecystokinin 58 occurs in both sulfated (CCK58(s)) and nonsulfated (CCK58(ns)) forms, which differ in their receptor-binding activities. CCK58(s) binds to the CCK-A receptor with high affinity, CCK58(ns) binds poorly to the CCK-A receptor. CCK58(s) and CCK58(ns) both bind the CCK-B receptor. The precursor is cleaved by ACE, which removes the Gly-Arg-Arg peptide at the C-terminus, leading to mature hormone.

It is found in the secreted. This peptide hormone induces gall bladder contraction and the release of pancreatic enzymes in the gut. Its function in the brain is not clear. Binding to CCK-A receptors stimulates amylase release from the pancreas, binding to CCK-B receptors stimulates gastric acid secretion. cholecystokinin 58 and cholecystokinin 8, but not cholecystokinin 58 desnonopeptide, stimulate amylase release from the pancreas. cholecystokinin 58, but not cholecystokinin 8, increases bile-pancreatic volume. This is Cholecystokinins from Canis lupus familiaris (Dog).